Reading from the N-terminus, the 340-residue chain is Cytochrome P450 monooxygenase cheG (340 aa).

Asn-25 is a glycosylation site (N-linked (GlcNAc...) asparagine). The chain crosses the membrane as a helical span at residues 37 to 57 (MLLGIPTVILSLTPAVLRLLI). Cys-283 lines the heme pocket. The interval 308-340 (LPPGQGKPEKGSMPNGSMSPDTKAKVLFRSRKL) is disordered. Residue Asn-322 is glycosylated (N-linked (GlcNAc...) asparagine).

The protein belongs to the cytochrome P450 family. Requires heme as cofactor.

It is found in the membrane. The protein operates within secondary metabolite biosynthesis. In terms of biological role, cytochrome P450 monooxygenase; part of the gene cluster that mediates the biosynthesis of chaetoglobosin A which has a unique inhibitory activity against actin polymerization in mammalian cells. Chaetoglobosin A and its intermediates are involved in the morphological differentiation of C.globosum. The first step of the pathway is the synthesis of prochaetoglobosin I via condensation of one acetyl-CoA, 8 malonyl-CoA, and a L-tryptophan molecule by the PKS-NRPS hybrid synthetase cheA, followed by reduction of backbone double bond to install desired geometry by the enoyl reductase cheB. Further multiple oxidation steps performed by the cytochrome P450 monooxygenases cheE and cheG, as well as by the FAD-linked oxidoreductase cheF, lead to the formation of chaetoglobosin A. Depending on the order of action of these reductases, distinct intermediates can be identified. Within the pathway, the cytochrome P450 monooxygenase cheE catalyzes a stereospecific epoxidation on prochaetoglobosin I, cytoglobosin D, and chaetoglobosin J intermediates. The FAD-linked oxidoreductase cheF performs dehydrogenation of the C-20 hydroxyl groups in the 20-dihyrochaetoglobosin A and cytoglobosin D intermediates. Finally, the cytochrome P450 monooxygenase cheG can catalyze the stereospecific dihydroxylation of prochaetoglobosin I and prochaetoglobosin IV at C-19 and C-20, respectively. The Diels-Alderase cheD may play a role in the post-PKS-NRPS biosynthetic steps catalyzing Diels-Alder cyclization. This Chaetomium globosum (strain ATCC 6205 / CBS 148.51 / DSM 1962 / NBRC 6347 / NRRL 1970) (Soil fungus) protein is Cytochrome P450 monooxygenase cheG.